Consider the following 471-residue polypeptide: A-type ATP synthase subunit B (471 aa).

The protein belongs to the ATPase alpha/beta chains family. Has multiple subunits with at least A(3), B(3), C, D, E, F, H, I and proteolipid K(x).

Its subcellular location is the cell membrane. Functionally, component of the A-type ATP synthase that produces ATP from ADP in the presence of a proton gradient across the membrane. The B chain is a regulatory subunit. This is A-type ATP synthase subunit B from Ignicoccus hospitalis (strain KIN4/I / DSM 18386 / JCM 14125).